The chain runs to 989 residues: Putative transcription elongation factor SPT5 homolog 2 (989 aa).

Over residues 1–26 (MSQYSDDDYSHEDDSEMEDEDEEDEY) the composition is skewed to acidic residues. The segment at 1-82 (MSQYSDDDYS…VEDDDDDVDV (82 aa)) is disordered. Basic residues predominate over residues 31–42 (SRKGRSGKKRGR). Residues 65–82 (WEVEVDDDVEDDDDDVDV) show a composition bias toward acidic residues. 5 KOW domains span residues 260 to 287 (DLSR…VDNV), 412 to 439 (HFMK…VDEE), 464 to 491 (YFEP…VDQH), 588 to 615 (VVAV…IYKG), and 683 to 710 (DHLV…VKDK). The segment at 790–852 (MSPPRDNWED…SPMTPSSTSY (63 aa)) is disordered. Residues 842–852 (PSPMTPSSTSY) show a composition bias toward low complexity. One can recognise a KOW 6 domain in the interval 936–963 (CPKKNERVKILGGKYCGSTAKVIGEDGQ).

The protein belongs to the SPT5 family.

Its subcellular location is the nucleus. In terms of biological role, may regulate transcription elongation by RNA polymerase II. May enhance transcriptional pausing at sites proximal to the promoter, which may in turn facilitate the assembly of an elongation competent RNA polymerase II complex. This chain is Putative transcription elongation factor SPT5 homolog 2, found in Arabidopsis thaliana (Mouse-ear cress).